The chain runs to 382 residues: 1-deoxy-D-xylulose 5-phosphate reductoisomerase (382 aa).

Residues Thr-10, Gly-11, Ser-12, Ile-13, Gly-36, and Asn-122 each coordinate NADPH. Lys-123 provides a ligand contact to 1-deoxy-D-xylulose 5-phosphate. Residue Glu-124 coordinates NADPH. Asp-148 serves as a coordination point for Mn(2+). 1-deoxy-D-xylulose 5-phosphate-binding residues include Ser-149, Glu-150, Ser-174, and His-197. Mn(2+) is bound at residue Glu-150. An NADPH-binding site is contributed by Gly-203. Positions 210, 215, 216, and 219 each coordinate 1-deoxy-D-xylulose 5-phosphate. Residue Glu-219 coordinates Mn(2+).

This sequence belongs to the DXR family. Requires Mg(2+) as cofactor. The cofactor is Mn(2+).

It catalyses the reaction 2-C-methyl-D-erythritol 4-phosphate + NADP(+) = 1-deoxy-D-xylulose 5-phosphate + NADPH + H(+). It functions in the pathway isoprenoid biosynthesis; isopentenyl diphosphate biosynthesis via DXP pathway; isopentenyl diphosphate from 1-deoxy-D-xylulose 5-phosphate: step 1/6. Functionally, catalyzes the NADPH-dependent rearrangement and reduction of 1-deoxy-D-xylulose-5-phosphate (DXP) to 2-C-methyl-D-erythritol 4-phosphate (MEP). The protein is 1-deoxy-D-xylulose 5-phosphate reductoisomerase of Chlorobium phaeobacteroides (strain BS1).